The sequence spans 712 residues: Ferric reductase transmembrane component 6 (712 aa).

The signal sequence occupies residues 1–17 (MHRTLLFLTWLISLTKA). The Vacuolar segment spans residues 18–167 (FNIKLPHTEK…HAHAYNLDIS (150 aa)). N89, N112, and N124 each carry an N-linked (GlcNAc...) asparagine glycan. The helical transmembrane segment at 168-188 (SVYGAYLTYYFVIVGIIAVFF) threads the bilayer. Over 189–244 (HMSHYNGLNRALFASRFVNYIRGHFVLPTFLVDKHANHFKFLNVEVFTGLMPNSLE) the chain is Cytoplasmic. Residues 245 to 265 (AWIIFGYTLANIIFLSISYII) form a helical membrane-spanning segment. The Vacuolar segment spans residues 266–287 (DPYNLIFNSHLSQFTRLLADRS). In terms of domain architecture, Ferric oxidoreductase spans 287-411 (SGILAFTQFP…YCCWQHVKIF (125 aa)). Residues 288 to 308 (GILAFTQFPLIIIFTARNSFL) form a helical membrane-spanning segment. At 309–328 (EFLTGVKFNSFISFHKWIGR) the chain is on the cytoplasmic side. 2 residues coordinate heme: H323 and H337. The helical transmembrane segment at 329–349 (IMVLNATIHSLSYSLFAIINH) threads the bilayer. The Vacuolar segment spans residues 350 to 360 (AFKISNKQLYW). Residues 361 to 381 (KFGIASITVLCVLLVLSLGIV) form a helical membrane-spanning segment. Residues 382-387 (RKRHYE) are Cytoplasmic-facing. A helical membrane pass occupies residues 388 to 408 (FFLYTHIILALLFFYCCWQHV). The heme site is built by H393 and H407. The Vacuolar segment spans residues 409-416 (KIFNGWKE). Residues 412-546 (NGWKEWIVVS…EGPYGPSNLH (135 aa)) enclose the FAD-binding FR-type domain. A helical membrane pass occupies residues 417–437 (WIVVSLLIWGLEKLFRIWNIL). The Cytoplasmic portion of the chain corresponds to 438–712 (QFRFPKATLI…IEYFEEYQCW (275 aa)). An FAD-binding site is contributed by 493–499 (HPFTIID). Residues 538-541 (GPYG) and 678-679 (CG) each bind NADP(+).

This sequence belongs to the ferric reductase (FRE) family. Requires FAD as cofactor.

It is found in the vacuole membrane. It catalyses the reaction 2 a Fe(II)-siderophore + NADP(+) + H(+) = 2 a Fe(III)-siderophore + NADPH. In terms of biological role, metalloreductase responsible for reducing vacuolar iron and copper prior to transport into the cytosol. Catalyzes the reduction of Fe(3+) to Fe(2+) and Cu(2+) to Cu(+), respectively, which can then be transported by the respective vacuolar efflux systems to the cytosol. The sequence is that of Ferric reductase transmembrane component 6 (FRE6) from Saccharomyces cerevisiae (strain ATCC 204508 / S288c) (Baker's yeast).